Consider the following 130-residue polypeptide: MSGRGKQGGKARAKAKSRSSRAGLQFPVGRVHRLLRKGNYAERVGAGAPVYLAAVLEYLTAEILELAGNAARDNKKTRIIPRHLQLAVRNDEELNKLLGGVTIAQGGVLPNIQAVLLPKKTESHKPGKNK.

A disordered region spans residues 1 to 22 (MSGRGKQGGKARAKAKSRSSRA). Ser2 bears the N-acetylserine mark. Ser2 carries the post-translational modification Phosphoserine; by RPS6KA5. Arg4 carries the citrulline; alternate modification. Arg4 carries the post-translational modification Symmetric dimethylarginine; by PRMT5; alternate. Position 6 is an N6-(2-hydroxyisobutyryl)lysine (Lys6). The span at 7-19 (QGGKARAKAKSRS) shows a compositional bias: basic residues. Lys10 carries the N6-(2-hydroxyisobutyryl)lysine; alternate modification. An N6-(beta-hydroxybutyryl)lysine; alternate mark is found at Lys10 and Lys14. Lys10 carries the N6-lactoyllysine; alternate modification. Lys10 bears the N6-succinyllysine; alternate mark. Lys14 participates in a covalent cross-link: Glycyl lysine isopeptide (Lys-Gly) (interchain with G-Cter in ubiquitin); alternate. A Glycyl lysine isopeptide (Lys-Gly) (interchain with G-Cter in ubiquitin) cross-link involves residue Lys16. N6-(2-hydroxyisobutyryl)lysine; alternate is present on Lys37. Lys37 carries the post-translational modification N6-(beta-hydroxybutyryl)lysine; alternate. N6-crotonyllysine; alternate is present on Lys37. An N6-(2-hydroxyisobutyryl)lysine mark is found at Lys75 and Lys76. Lys96 carries the post-translational modification N6-(2-hydroxyisobutyryl)lysine; alternate. Lys96 is modified (N6-(beta-hydroxybutyryl)lysine; alternate). Lys96 carries the N6-succinyllysine; alternate modification. At Lys96 the chain carries N6-glutaryllysine; alternate. Gln105 bears the N5-methylglutamine mark. Lys119 carries the N6-(2-hydroxyisobutyryl)lysine; alternate modification. Lys119 carries the N6-(beta-hydroxybutyryl)lysine; alternate modification. 2 positions are modified to N6-crotonyllysine; alternate: Lys119 and Lys120. Lys119 and Lys120 each carry N6-glutaryllysine; alternate. Lys120 participates in a covalent cross-link: Glycyl lysine isopeptide (Lys-Gly) (interchain with G-Cter in ubiquitin); alternate. Thr121 carries the phosphothreonine; by DCAF1 modification.

Belongs to the histone H2A family. As to quaternary structure, the nucleosome is a histone octamer containing two molecules each of H2A, H2B, H3 and H4 assembled in one H3-H4 heterotetramer and two H2A-H2B heterodimers. The octamer wraps approximately 147 bp of DNA. Post-translationally, deiminated on Arg-4 in granulocytes upon calcium entry. In terms of processing, monoubiquitination of Lys-120 (H2AK119Ub) by RING1, TRIM37 and RNF2/RING2 complex gives a specific tag for epigenetic transcriptional repression and participates in X chromosome inactivation of female mammals. It is involved in the initiation of both imprinted and random X inactivation. Ubiquitinated H2A is enriched in inactive X chromosome chromatin. Ubiquitination of H2A functions downstream of methylation of 'Lys-27' of histone H3 (H3K27me). H2AK119Ub by RNF2/RING2 can also be induced by ultraviolet and may be involved in DNA repair. Monoubiquitination of Lys-120 (H2AK119Ub) by TRIM37 may promote transformation of cells in a number of breast cancers. Following DNA double-strand breaks (DSBs), it is ubiquitinated through 'Lys-63' linkage of ubiquitin moieties by the E2 ligase UBE2N and the E3 ligases RNF8 and RNF168, leading to the recruitment of repair proteins to sites of DNA damage. Ubiquitination at Lys-14 and Lys-16 (H2AK13Ub and H2AK15Ub, respectively) in response to DNA damage is initiated by RNF168 that mediates monoubiquitination at these 2 sites, and 'Lys-63'-linked ubiquitin are then conjugated to monoubiquitin; RNF8 is able to extend 'Lys-63'-linked ubiquitin chains in vitro. Deubiquitinated by USP51 at Lys-14 and Lys-16 (H2AK13Ub and H2AK15Ub, respectively) after damaged DNA is repaired. H2AK119Ub and ionizing radiation-induced 'Lys-63'-linked ubiquitination (H2AK13Ub and H2AK15Ub) are distinct events. Phosphorylation on Ser-2 (H2AS1ph) is enhanced during mitosis. Phosphorylation on Ser-2 by RPS6KA5/MSK1 directly represses transcription. Acetylation of H3 inhibits Ser-2 phosphorylation by RPS6KA5/MSK1. Phosphorylation at Thr-121 (H2AT120ph) by DCAF1 is present in the regulatory region of many tumor suppresor genes and down-regulates their transcription. Post-translationally, symmetric dimethylation on Arg-4 by the PRDM1/PRMT5 complex may play a crucial role in the germ-cell lineage. In terms of processing, glutamine methylation at Gln-105 (H2AQ104me) by FBL is specifically dedicated to polymerase I. It is present at 35S ribosomal DNA locus and impairs binding of the FACT complex. Crotonylation (Kcr) is specifically present in male germ cells and marks testis-specific genes in post-meiotic cells, including X-linked genes that escape sex chromosome inactivation in haploid cells. Crotonylation marks active promoters and enhancers and confers resistance to transcriptional repressors. It is also associated with post-meiotically activated genes on autosomes. Post-translationally, lactylated in macrophages by EP300/P300 by using lactoyl-CoA directly derived from endogenous or exogenous lactate, leading to stimulates gene transcription.

Its subcellular location is the nucleus. It localises to the chromosome. Functionally, core component of nucleosome. Nucleosomes wrap and compact DNA into chromatin, limiting DNA accessibility to the cellular machineries which require DNA as a template. Histones thereby play a central role in transcription regulation, DNA repair, DNA replication and chromosomal stability. DNA accessibility is regulated via a complex set of post-translational modifications of histones, also called histone code, and nucleosome remodeling. The sequence is that of Histone H2A type 2-B from Homo sapiens (Human).